We begin with the raw amino-acid sequence, 554 residues long: Hydroxylamine reductase (554 aa).

Residues cysteine 3, cysteine 6, cysteine 18, and cysteine 25 each contribute to the [2Fe-2S] cluster site. Hybrid [4Fe-2O-2S] cluster contacts are provided by histidine 252, glutamate 276, cysteine 320, cysteine 408, cysteine 436, cysteine 461, glutamate 495, and lysine 497. Cysteine 408 is modified (cysteine persulfide).

Belongs to the HCP family. Requires [2Fe-2S] cluster as cofactor. It depends on hybrid [4Fe-2O-2S] cluster as a cofactor.

Its subcellular location is the cytoplasm. The catalysed reaction is A + NH4(+) + H2O = hydroxylamine + AH2 + H(+). Its function is as follows. Catalyzes the reduction of hydroxylamine to form NH(3) and H(2)O. This is Hydroxylamine reductase from Shewanella baltica (strain OS223).